A 250-amino-acid chain; its full sequence is Mycofactocin precursor peptide peptidase (250 aa).

Residues Glu-38, His-40, Asp-49, His-127, and Glu-166 each contribute to the a divalent metal cation site.

It belongs to the creatininase superfamily. As to quaternary structure, homooctamer. Fe(2+) is required as a cofactor. The cofactor is Zn(2+).

It catalyses the reaction [mycofactocin precursor peptide]-C-terminal glycyl-N-{5-[(4-hydroxyphenyl)methyl]-4,4-dimethyl-2-oxopyrrolidin-3-yl}acetamide + H2O = [mycofactocin precursor peptide]-C-terminal glycine + 3-amino-5-[(4-hydroxyphenyl)methyl]-4,4-dimethyl-2-pyrrolidin-2-one. Peptidase involved in the biosynthesis of the enzyme cofactor mycofactocin (MFT). Catalyzes cleavage of the MftC-modified MftA peptide to liberate its final two residues, which consist of a cross-linked valine-decarboxylated tyrosine dipeptide (named 3-amino-5-[(4-hydroxyphenyl)methyl]-4,4-dimethyl-2-pyrrolidin-2-one or ADHP). This chain is Mycofactocin precursor peptide peptidase, found in Mycobacterium ulcerans (strain Agy99).